The following is a 342-amino-acid chain: GTPase Obg (342 aa).

One can recognise an Obg domain in the interval 1–159 (MKFLDEAKVY…MWIWLRLKLI (159 aa)). In terms of domain architecture, OBG-type G spans 160 to 327 (ADAGLVGLPN…ALRALQTEID (168 aa)). Residues 166 to 173 (GLPNAGKS), 191 to 195 (FTTLH), 212 to 215 (DIPG), 279 to 282 (SKAD), and 308 to 310 (SSA) each bind GTP. Positions 173 and 193 each coordinate Mg(2+).

It belongs to the TRAFAC class OBG-HflX-like GTPase superfamily. OBG GTPase family. Monomer. Requires Mg(2+) as cofactor.

It localises to the cytoplasm. In terms of biological role, an essential GTPase which binds GTP, GDP and possibly (p)ppGpp with moderate affinity, with high nucleotide exchange rates and a fairly low GTP hydrolysis rate. Plays a role in control of the cell cycle, stress response, ribosome biogenesis and in those bacteria that undergo differentiation, in morphogenesis control. The polypeptide is GTPase Obg (Methylobacterium radiotolerans (strain ATCC 27329 / DSM 1819 / JCM 2831 / NBRC 15690 / NCIMB 10815 / 0-1)).